A 364-amino-acid polypeptide reads, in one-letter code: Fructose-bisphosphate aldolase, non-muscle type (364 aa).

Positions 56 and 147 each coordinate substrate. K230 (schiff-base intermediate with dihydroxyacetone-P) is an active-site residue.

Belongs to the class I fructose-bisphosphate aldolase family. In terms of assembly, homotetramer. Expressed mainly in the liver and also in brain and other tissues, except for the heart muscle.

It carries out the reaction beta-D-fructose 1,6-bisphosphate = D-glyceraldehyde 3-phosphate + dihydroxyacetone phosphate. The protein operates within carbohydrate degradation; glycolysis; D-glyceraldehyde 3-phosphate and glycerone phosphate from D-glucose: step 4/4. The sequence is that of Fructose-bisphosphate aldolase, non-muscle type from Lethenteron camtschaticum (Japanese lamprey).